Here is a 640-residue protein sequence, read N- to C-terminus: 1,4-alpha-glucan branching enzyme GlgB (640 aa).

Aspartate 318 serves as the catalytic Nucleophile. The Proton donor role is filled by glutamate 371.

Belongs to the glycosyl hydrolase 13 family. GlgB subfamily. As to quaternary structure, monomer.

The enzyme catalyses Transfers a segment of a (1-&gt;4)-alpha-D-glucan chain to a primary hydroxy group in a similar glucan chain.. It functions in the pathway glycan biosynthesis; glycogen biosynthesis. Catalyzes the formation of the alpha-1,6-glucosidic linkages in glycogen by scission of a 1,4-alpha-linked oligosaccharide from growing alpha-1,4-glucan chains and the subsequent attachment of the oligosaccharide to the alpha-1,6 position. This chain is 1,4-alpha-glucan branching enzyme GlgB, found in Francisella tularensis subsp. tularensis (strain FSC 198).